Here is a 1028-residue protein sequence, read N- to C-terminus: Carbamoyl phosphate synthase large chain (1028 aa).

Residues 1-409 are carboxyphosphate synthetic domain; the sequence is MPPRRDLKKI…ALMKALRGLE (409 aa). ATP-binding residues include Arg-129, Arg-169, Gly-175, Gly-176, Glu-208, Val-210, Glu-215, Gly-241, Val-242, His-243, Gln-285, and Glu-299. Residues 133 to 328 form the ATP-grasp 1 domain; the sequence is QEAMQRIGLE…IAKIAALLAV (196 aa). Gln-285, Glu-299, and Asn-301 together coordinate Mg(2+). Mn(2+)-binding residues include Gln-285, Glu-299, and Asn-301. The oligomerization domain stretch occupies residues 410–549; that stretch reads RDVRALAGVR…YSTYELEDEV (140 aa). A carbamoyl phosphate synthetic domain region spans residues 550 to 933; sequence WPSQKPKVVI…AYYKAELGAG (384 aa). Positions 674-866 constitute an ATP-grasp 2 domain; sequence HALCQRLGIP…LAKLAALIAV (193 aa). ATP is bound by residues Arg-710, Arg-750, Leu-752, Glu-757, Gly-782, Val-783, His-784, Ser-785, Gln-825, and Glu-837. The Mg(2+) site is built by Gln-825, Glu-837, and Asn-839. Gln-825, Glu-837, and Asn-839 together coordinate Mn(2+). The MGS-like domain occupies 934–1028; that stretch reads QRLPLSGRVR…QDWHQKAPRG (95 aa). The segment at 934-1028 is allosteric domain; that stretch reads QRLPLSGRVR…QDWHQKAPRG (95 aa).

The protein belongs to the CarB family. Composed of two chains; the small (or glutamine) chain promotes the hydrolysis of glutamine to ammonia, which is used by the large (or ammonia) chain to synthesize carbamoyl phosphate. Tetramer of heterodimers (alpha,beta)4. Requires Mg(2+) as cofactor. It depends on Mn(2+) as a cofactor.

The enzyme catalyses hydrogencarbonate + L-glutamine + 2 ATP + H2O = carbamoyl phosphate + L-glutamate + 2 ADP + phosphate + 2 H(+). It catalyses the reaction hydrogencarbonate + NH4(+) + 2 ATP = carbamoyl phosphate + 2 ADP + phosphate + 2 H(+). The protein operates within amino-acid biosynthesis; L-arginine biosynthesis; carbamoyl phosphate from bicarbonate: step 1/1. It functions in the pathway pyrimidine metabolism; UMP biosynthesis via de novo pathway; (S)-dihydroorotate from bicarbonate: step 1/3. Functionally, large subunit of the glutamine-dependent carbamoyl phosphate synthetase (CPSase). CPSase catalyzes the formation of carbamoyl phosphate from the ammonia moiety of glutamine, carbonate, and phosphate donated by ATP, constituting the first step of 2 biosynthetic pathways, one leading to arginine and/or urea and the other to pyrimidine nucleotides. The large subunit (synthetase) binds the substrates ammonia (free or transferred from glutamine from the small subunit), hydrogencarbonate and ATP and carries out an ATP-coupled ligase reaction, activating hydrogencarbonate by forming carboxy phosphate which reacts with ammonia to form carbamoyl phosphate. This Thermus thermophilus (strain ATCC 27634 / DSM 579 / HB8) protein is Carbamoyl phosphate synthase large chain.